The primary structure comprises 121 residues: Nitrogenase-stabilizing/protective protein NifW (121 aa).

It belongs to the NifW family. As to quaternary structure, homotrimer; associates with NifD.

In terms of biological role, may protect the nitrogenase Fe-Mo protein from oxidative damage. The sequence is that of Nitrogenase-stabilizing/protective protein NifW from Leptothrix cholodnii (strain ATCC 51168 / LMG 8142 / SP-6) (Leptothrix discophora (strain SP-6)).